The chain runs to 215 residues: 3-demethoxyubiquinol 3-hydroxylase (215 aa).

Glu64, Glu94, His97, Glu146, Glu178, and His181 together coordinate Fe cation.

It belongs to the COQ7 family. Fe cation is required as a cofactor.

The protein localises to the cell membrane. The catalysed reaction is a 5-methoxy-2-methyl-3-(all-trans-polyprenyl)benzene-1,4-diol + AH2 + O2 = a 3-demethylubiquinol + A + H2O. The protein operates within cofactor biosynthesis; ubiquinone biosynthesis. Functionally, catalyzes the hydroxylation of 2-nonaprenyl-3-methyl-6-methoxy-1,4-benzoquinol during ubiquinone biosynthesis. In Pseudomonas fluorescens (strain ATCC BAA-477 / NRRL B-23932 / Pf-5), this protein is 3-demethoxyubiquinol 3-hydroxylase.